A 314-amino-acid polypeptide reads, in one-letter code: Transmembrane protein 178B (314 aa).

The N-terminal stretch at 1-24 (MRLLAGAGLCLALAALALLAVALS) is a signal peptide. The tract at residues 32 to 83 (DARRHRDRCRKPGGKRNDPGYMYTPGQHLPLRGEPPSSRIRSPRGGEPGGVR) is disordered. Positions 36-45 (HRDRCRKPGG) are enriched in basic residues. 3 helical membrane-spanning segments follow: residues 194 to 214 (AGFIGMAVSIILFGWMVGVLG), 228 to 248 (LLFLMGGTCCIISLCTCVAGI), and 274 to 294 (MFCAWGGLGLTLLSGFLCTLA).

The protein belongs to the TMEM178 family.

The protein localises to the membrane. The polypeptide is Transmembrane protein 178B (tmem178b) (Xenopus tropicalis (Western clawed frog)).